The sequence spans 209 residues: Egg case collagen (209 aa).

The tract at residues 1 to 129 (VYMSGXGKPP…YKGNHGFYLV (129 aa)) is nonhelical region. Residues 130 to 209 (LPAGYPGTPG…DPGLPGEYGV (80 aa)) are triple-helical region. Residues 138 to 209 (PGTPGPRGGP…DPGLPGEYGV (72 aa)) are disordered. Residues 142–162 (GPRGGPGDPGMPGEPGVGFPG) are compositionally biased toward gly residues.

Functionally, major component of the egg case wall which is secreted by the oviduct. The egg case combines mechanical strength and toughness with high permeability to small molecules and ions. The protein is Egg case collagen of Scyliorhinus canicula (Small-spotted catshark).